Reading from the N-terminus, the 125-residue chain is MINQTAMLLTRSLRPRSAFVGAGLGYPRRFLTTVESPLHEFFVVIFNKRNAKESDLAPAPQTIKFKEQDVILTFAGDMMASAAPATDSAPERTLGACFRVPGTQRAESVAGDSRPREHRQGAVGY.

Residues 104-125 form a disordered region; it reads QRAESVAGDSRPREHRQGAVGY. The segment covering 113 to 125 has biased composition (basic and acidic residues); sequence SRPREHRQGAVGY.

Its pathway is secondary metabolite biosynthesis. Its function is as follows. Part of the gene cluster that mediates the biosynthesis of aspercryptins, linear lipopeptides built from six amino acids including 2 highly unusual and nonproteogenic amino acids, 2-amino-octanoic acid (2aoa) and 2-amino-dodecanol (2adol). The core structure of aspercryptins is as follows: Ser/Ala-Thr-Ile/Val-2aoa-Asn-2adol. The first step of aspercryptin biosynthesis is the generation of the fatty acid precursors, octanoic and dodecanoic acids, by the FAS subunits atnF and atnM. The fatty acid precursors are likely transformed into the corresponding alpha-amino fatty acids in three steps. First, they are hydroxylated by the cytochrome P450 monooxygenase atnE, then oxidized to the corresponding alpha-keto acids by the NAD(P)-dependent oxidoreductase atnD, and finally converted to the alpha-amino fatty acids by the PLP-dependent aminotransferases atnH or atnJ. the alpha-amino fatty acids, 2-amino-octanoic and 2-amino-dodecanoic acids, are recognized, activated, and covalently tethered to the NRPS atnA by its fourth and sixth adenylation domains. The second module of atnA is the Thr module and contains an epimerase (E) domain responsible for the epimerization of Thr to D-allo-Thr. Additionally, despite atnA having only one epimerase domain, the first amino acid of aspercryptin A1 is D-Ser, suggesting that serine is either loaded directly as D-Ser on the first module or that the epimerase domain in the threonine module epimerizes both L-Ser and L-Thr. After condensation of the hexapeptide of aspercryptin, the C-terminal reductase (TE) domain might be involved in the reductive release and production of the aldehyde hexapeptide. Further reduction would generate aspercryptins. The variety of aspercryptins produced reflects the flexibility of the atnA NRPS, allowing incorporation of alanine instead of serine, valine for isoleucine, and a C10 fatty amino alcohol instead of the C12 version. AtnB seems to be involved in the selectivity for Ile versus Val by the third module. Moreover, type B, C and D aspercryptins have an additional N-terminal cichorine, acetyl and propionyl group respectively. This is Aspercryptin biosynthesis cluster protein K from Emericella nidulans (strain FGSC A4 / ATCC 38163 / CBS 112.46 / NRRL 194 / M139) (Aspergillus nidulans).